Here is a 138-residue protein sequence, read N- to C-terminus: Basic phospholipase A2 homolog G6K49 (138 aa).

Positions 1–16 (MRTLWIMAVLLLGVEG) are cleaved as a signal peptide. 7 disulfide bridges follow: Cys42/Cys132, Cys44/Cys60, Cys59/Cys112, Cys65/Cys138, Cys66/Cys105, Cys73/Cys98, and Cys91/Cys103. Residues 122 to 133 (KKHRVTVKFLCK) are important for membrane-damaging activities in eukaryotes and bacteria; heparin-binding.

The protein belongs to the phospholipase A2 family. Group II subfamily. K49 sub-subfamily. Homodimer; non-covalently linked. In terms of tissue distribution, expressed by the venom gland.

The protein localises to the secreted. Snake venom phospholipase A2 (PLA2) that lacks enzymatic activity. Displays myotoxic activities. A model of myotoxic mechanism has been proposed: an apo Lys49-PLA2 is activated by the entrance of a hydrophobic molecule (e.g. fatty acid) at the hydrophobic channel of the protein leading to a reorientation of a monomer. This reorientation causes a transition between 'inactive' to 'active' states, causing alignment of C-terminal and membrane-docking sites (MDoS) side-by-side and putting the membrane-disruption sites (MDiS) in the same plane, exposed to solvent and in a symmetric position for both monomers. The MDoS region stabilizes the toxin on membrane by the interaction of charged residues with phospholipid head groups. Subsequently, the MDiS region destabilizes the membrane with penetration of hydrophobic residues. This insertion causes a disorganization of the membrane, allowing an uncontrolled influx of ions (i.e. calcium and sodium), and eventually triggering irreversible intracellular alterations and cell death. This chain is Basic phospholipase A2 homolog G6K49, found in Calloselasma rhodostoma (Malayan pit viper).